The following is a 1037-amino-acid chain: Sentrin-specific protease 7 (1037 aa).

The span at 1–10 (MDRARPGRRR) shows a compositional bias: basic residues. Disordered regions lie at residues 1–27 (MDRARPGRRRASSEIVTEGKRKKSSPA) and 185–399 (SDTA…ENSS). 3 positions are modified to phosphoserine: Ser-12, Ser-13, and Ser-25. Low complexity predominate over residues 192 to 208 (SEQLSSSSDGSLESCQS). A compositionally biased stretch (polar residues) spans 272 to 282 (GTSNKNTSYSY). The span at 290–300 (VSRKRKKRGRS) shows a compositional bias: basic residues. Basic and acidic residues-rich tracts occupy residues 301–321 (NFHDSHNSKTSLDKPTEHTKE) and 328–341 (VSRKLEESGEDSHQ). Over residues 379–399 (ASSPNKSLESSASSEVSENSS) the composition is skewed to low complexity. Phosphoserine is present on residues Ser-434 and Ser-435. The protease stretch occupies residues 747 to 1037 (LGVTNEDLEC…HLQQQKGGSC (291 aa)). His-847 is an active-site residue. The segment at 873–909 (QFQGQQSQHDHKMTDNDPHTTSTVSTSAEDSQSTEVN) is disordered. Residues 880–890 (QHDHKMTDNDP) show a composition bias toward basic and acidic residues. The segment covering 891 to 909 (HTTSTVSTSAEDSQSTEVN) has biased composition (polar residues). Asp-926 is an active-site residue. The Nucleophile role is filled by Cys-979.

The protein belongs to the peptidase C48 family.

Its subcellular location is the cytoplasm. Protease that acts as a positive regulator of the cGAS-STING pathway by catalyzing desumoylation of CGAS. Desumoylation of CGAS promotes DNA-binding activity of CGAS, subsequent oligomerization and activation. Deconjugates SUMO2 and SUMO3 from targeted proteins, but not SUMO1. Catalyzes the deconjugation of poly-SUMO2 and poly-SUMO3 chains. Has very low efficiency in processing full-length SUMO proteins to their mature forms. The sequence is that of Sentrin-specific protease 7 from Mus musculus (Mouse).